Consider the following 432-residue polypeptide: Adenylosuccinate synthetase (432 aa).

GTP is bound by residues 13–19 and 41–43; these read GDEGKGK and GHT. Aspartate 14 acts as the Proton acceptor in catalysis. Positions 14 and 41 each coordinate Mg(2+). IMP contacts are provided by residues 14–17, 39–42, threonine 130, arginine 144, glutamine 225, threonine 240, and arginine 304; these read DEGK and NAGH. The active-site Proton donor is the histidine 42. 300–306 contacts substrate; the sequence is AVTGRPR. GTP is bound by residues arginine 306, 332-334, and 415-417; these read KLD and STG.

Belongs to the adenylosuccinate synthetase family. Homodimer. Requires Mg(2+) as cofactor.

It localises to the cytoplasm. It carries out the reaction IMP + L-aspartate + GTP = N(6)-(1,2-dicarboxyethyl)-AMP + GDP + phosphate + 2 H(+). It participates in purine metabolism; AMP biosynthesis via de novo pathway; AMP from IMP: step 1/2. Functionally, plays an important role in the de novo pathway of purine nucleotide biosynthesis. Catalyzes the first committed step in the biosynthesis of AMP from IMP. In Haemophilus ducreyi (strain 35000HP / ATCC 700724), this protein is Adenylosuccinate synthetase.